The primary structure comprises 317 residues: Periplasmic [NiFe] hydrogenase small subunit 1 (317 aa).

The tat-type signal signal peptide spans 1–49; it reads MRFSVGLGKEGAEERLARRGVSRRDFLKFCTAIAVTMGMGPAFAPEVAR. Residues Cys67, Cys70, Cys164, Cys200, His238, Cys241, Cys266, and Cys272 each contribute to the [4Fe-4S] cluster site. The [3Fe-4S] cluster site is built by Cys281, Cys299, and Cys302.

It belongs to the [NiFe]/[NiFeSe] hydrogenase small subunit family. In terms of assembly, heterodimer of a large and a small subunit. It depends on [3Fe-4S] cluster as a cofactor. [4Fe-4S] cluster is required as a cofactor. Predicted to be exported by the Tat system. The position of the signal peptide cleavage has not been experimentally proven.

It is found in the periplasm. It catalyses the reaction 2 Fe(III)-[cytochrome c3] + H2 = 2 Fe(II)-[cytochrome c3] + 2 H(+). The protein is Periplasmic [NiFe] hydrogenase small subunit 1 (hynB1) of Nitratidesulfovibrio vulgaris (strain ATCC 29579 / DSM 644 / CCUG 34227 / NCIMB 8303 / VKM B-1760 / Hildenborough) (Desulfovibrio vulgaris).